A 303-amino-acid chain; its full sequence is Taste receptor type 2 member 2 (303 aa).

At M1–H10 the chain is on the extracellular side. The helical transmembrane segment at I11–V31 threads the bilayer. Over N32–R56 the chain is Cytoplasmic. The chain crosses the membrane as a helical span at residues F57–Y77. Residues V78 to K79 lie on the Extracellular side of the membrane. A helical membrane pass occupies residues I80–F100. The Cytoplasmic portion of the chain corresponds to A101–T102. The chain crosses the membrane as a helical span at residues C103–L123. At K124–K129 the chain is on the extracellular side. Residues L130–I150 form a helical membrane-spanning segment. Residues E151 to N185 are Cytoplasmic-facing. Residues L186 to L206 traverse the membrane as a helical segment. Residues Y207 to T234 lie on the Extracellular side of the membrane. Residues V235–F255 traverse the membrane as a helical segment. At S256 to G277 the chain is on the cytoplasmic side.

The protein belongs to the G-protein coupled receptor T2R family.

The protein resides in the cell membrane. Bitter taste receptor that detects natural and synthetic bitter compounds. This is Taste receptor type 2 member 2 from Homo sapiens (Human).